The sequence spans 335 residues: tRNA N6-adenosine threonylcarbamoyltransferase (335 aa).

Histidine 107 and histidine 111 together coordinate Fe cation. Substrate contacts are provided by residues 129-133 (LVSGG), aspartate 162, glycine 175, and asparagine 268. Aspartate 296 serves as a coordination point for Fe cation.

It belongs to the KAE1 / TsaD family. Requires Fe(2+) as cofactor.

It is found in the cytoplasm. The enzyme catalyses L-threonylcarbamoyladenylate + adenosine(37) in tRNA = N(6)-L-threonylcarbamoyladenosine(37) in tRNA + AMP + H(+). Required for the formation of a threonylcarbamoyl group on adenosine at position 37 (t(6)A37) in tRNAs that read codons beginning with adenine. Is involved in the transfer of the threonylcarbamoyl moiety of threonylcarbamoyl-AMP (TC-AMP) to the N6 group of A37, together with TsaE and TsaB. TsaD likely plays a direct catalytic role in this reaction. This is tRNA N6-adenosine threonylcarbamoyltransferase from Campylobacter fetus subsp. fetus (strain 82-40).